Reading from the N-terminus, the 497-residue chain is MDFAIRSDNPEKYRGDCIVVGVFESRKLTEAARVLDEAGKGHLGRIVDQGDMDGRANTTLLLHGISGIDSKRVLLIGLGKEEEFGEKVFLDVVRTTFKALQPTGAKDVGLYLTELTVKGRDVAWNVLQTVILAEESAYRFDRLKSKPEGRQPSLAKVDIGITDTSTAAAVETALQQGLAIAHGMKVTKDLGNLAPNICTPSYLAGQAEEMARTFNLKFSVLEEKDMEELGMGALLAVARGSHQPAKLIVLEYHGGKDSEKPVALVGKGVTFDAGGISLKPAAEMDEMKYDMGGAASVFGTLTAVAELKLPINVIGVIPTTENLPGGNATKPGDVVTSLSGQTIEILNTDAEGRLILCDALAYTERYDPEVVVDIATLTGACVVALGHVVSGVMGNDEPLVQELLQAGEQTYDRAWHLPLFDEYQEQLKSNFADTANIGSRWGGAITAACFLSRFTKKFRWAHLDIAGTAWKSGKEKGATGRPVPLLTQFLISRANKH.

Mn(2+)-binding residues include K267 and D272. The active site involves K279. Positions 290, 349, and 351 each coordinate Mn(2+). The active site involves R353.

It belongs to the peptidase M17 family. Mn(2+) is required as a cofactor.

It localises to the cytoplasm. The catalysed reaction is Release of an N-terminal amino acid, Xaa-|-Yaa-, in which Xaa is preferably Leu, but may be other amino acids including Pro although not Arg or Lys, and Yaa may be Pro. Amino acid amides and methyl esters are also readily hydrolyzed, but rates on arylamides are exceedingly low.. It catalyses the reaction Release of an N-terminal amino acid, preferentially leucine, but not glutamic or aspartic acids.. Functionally, presumably involved in the processing and regular turnover of intracellular proteins. Catalyzes the removal of unsubstituted N-terminal amino acids from various peptides. This chain is Probable cytosol aminopeptidase, found in Nitrosomonas europaea (strain ATCC 19718 / CIP 103999 / KCTC 2705 / NBRC 14298).